We begin with the raw amino-acid sequence, 161 residues long: MAQISDSLDVAPESFSTETPNEEAPKAPRAVLNVSGGAVGRRKQAIARVRLVPGSGSITVNGREFADYFPNKLHQQLVNDPFKVLDLLGSYDVVARISGGGPSGQAGALRLGIARALNEIDEENNRAVLKKNGFLSRDARVKERKKAGLKKARKAPQFSKR.

Disordered stretches follow at residues 1 to 27 and 142 to 161; these read MAQI…APKA and KERK…FSKR.

Belongs to the universal ribosomal protein uS9 family.

The polypeptide is Small ribosomal subunit protein uS9 (Clavibacter michiganensis subsp. michiganensis (strain NCPPB 382)).